A 207-amino-acid chain; its full sequence is Pyridoxine/pyridoxamine 5'-phosphate oxidase (207 aa).

FMN-binding positions include 53–58, 68–69, Lys-75, and Gln-97; these read RMVLLK and YT. Lys-58 provides a ligand contact to substrate. Substrate contacts are provided by Tyr-115, Arg-119, and Ser-123. FMN contacts are provided by residues 132–133 and Trp-177; that span reads QS. 183–185 serves as a coordination point for substrate; sequence RLH. Arg-187 serves as a coordination point for FMN.

This sequence belongs to the pyridoxamine 5'-phosphate oxidase family. In terms of assembly, homodimer. FMN is required as a cofactor.

It catalyses the reaction pyridoxamine 5'-phosphate + O2 + H2O = pyridoxal 5'-phosphate + H2O2 + NH4(+). It carries out the reaction pyridoxine 5'-phosphate + O2 = pyridoxal 5'-phosphate + H2O2. It participates in cofactor metabolism; pyridoxal 5'-phosphate salvage; pyridoxal 5'-phosphate from pyridoxamine 5'-phosphate: step 1/1. The protein operates within cofactor metabolism; pyridoxal 5'-phosphate salvage; pyridoxal 5'-phosphate from pyridoxine 5'-phosphate: step 1/1. In terms of biological role, catalyzes the oxidation of either pyridoxine 5'-phosphate (PNP) or pyridoxamine 5'-phosphate (PMP) into pyridoxal 5'-phosphate (PLP). The polypeptide is Pyridoxine/pyridoxamine 5'-phosphate oxidase (Bartonella henselae (strain ATCC 49882 / DSM 28221 / CCUG 30454 / Houston 1) (Rochalimaea henselae)).